The chain runs to 265 residues: Sulfur carrier protein FdhD (265 aa).

The active-site Cysteine persulfide intermediate is Cys107.

The protein belongs to the FdhD family.

The protein resides in the cytoplasm. Functionally, required for formate dehydrogenase (FDH) activity. Acts as a sulfur carrier protein that transfers sulfur from IscS to the molybdenum cofactor prior to its insertion into FDH. This is Sulfur carrier protein FdhD from Staphylococcus aureus (strain bovine RF122 / ET3-1).